We begin with the raw amino-acid sequence, 194 residues long: Outer membrane protein A (194 aa).

The signal sequence occupies residues 1-24; sequence MNKPSKFALALAFAAVTASGVASA. The beta stranded transmembrane segment at 30–38 threads the bilayer; sequence WRNPYGNVW. An OmpA-like domain is found at 77–193; it reads MAAKVVFNAD…RVEIEIVGSR (117 aa).

Belongs to the outer membrane OOP (TC 1.B.6) superfamily.

The protein localises to the cell outer membrane. Its function is as follows. Structural protein that may protect the integrity of the bacterium. This chain is Outer membrane protein A, found in Bordetella avium.